Here is a 327-residue protein sequence, read N- to C-terminus: Methionyl-tRNA formyltransferase (327 aa).

A (6S)-5,6,7,8-tetrahydrofolate-binding site is contributed by 122-125 (SLLP).

It belongs to the Fmt family.

The catalysed reaction is L-methionyl-tRNA(fMet) + (6R)-10-formyltetrahydrofolate = N-formyl-L-methionyl-tRNA(fMet) + (6S)-5,6,7,8-tetrahydrofolate + H(+). Functionally, attaches a formyl group to the free amino group of methionyl-tRNA(fMet). The formyl group appears to play a dual role in the initiator identity of N-formylmethionyl-tRNA by promoting its recognition by IF2 and preventing the misappropriation of this tRNA by the elongation apparatus. In Ralstonia pickettii (strain 12J), this protein is Methionyl-tRNA formyltransferase.